The chain runs to 325 residues: Melanocortin receptor 5 (325 aa).

Over 1 to 37 the chain is Extracellular; that stretch reads MNSSFHLHFLDLNLNATEGNLSGPNVKNKSSPCEDMG. Asn2, Asn15, Asn20, and Asn28 each carry an N-linked (GlcNAc...) asparagine glycan. Residues 38-61 traverse the membrane as a helical segment; it reads IAVEVFLTLGVISLLENILVIGAI. The Cytoplasmic portion of the chain corresponds to 62–73; it reads VKNKNLHSPMYF. Residues 74-97 form a helical membrane-spanning segment; sequence FVCSLAVADMLVSMSSAWETITIY. The Extracellular portion of the chain corresponds to 98–114; the sequence is LLNNKHLVIADAFVRHI. A helical transmembrane segment spans residues 115–138; sequence DNVFDSMICISVVASMCSLLAIAV. The Cytoplasmic segment spans residues 139–155; that stretch reads DRYVTIFYALRYHHIMT. A helical membrane pass occupies residues 156–179; sequence ARRSGAIIAGIWAFCTGCGIVFIL. Topologically, residues 180 to 186 are extracellular; sequence YSESTYV. A helical transmembrane segment spans residues 187 to 211; that stretch reads ILCLISMFFAMLFLLVSLYIHMFLL. The Cytoplasmic segment spans residues 212–239; it reads ARTHVKRIAALPGASSARQRTSMQGAVT. A helical transmembrane segment spans residues 240 to 265; that stretch reads VTMLLGVFTVCWAPFFLHLTLMLSCP. The Extracellular portion of the chain corresponds to 266-273; the sequence is QNLYCSRF. Residues 274-297 traverse the membrane as a helical segment; the sequence is MSHFNMYLILIMCNSVMDPLIYAF. The Cytoplasmic portion of the chain corresponds to 298–325; that stretch reads RSQEMRKTFKEIICCRGFRIACSFPRRD. Residues Cys311 and Cys312 are each lipidated (S-palmitoyl cysteine).

This sequence belongs to the G-protein coupled receptor 1 family. As to expression, expressed in the brain but not in the melanoma cells.

It localises to the cell membrane. Functionally, receptor for MSH (alpha, beta and gamma) and ACTH. The activity of this receptor is mediated by G proteins which activate adenylate cyclase. This receptor is a possible mediator of the immunomodulation properties of melanocortins. The polypeptide is Melanocortin receptor 5 (MC5R) (Homo sapiens (Human)).